The primary structure comprises 407 residues: Na(+)-translocating NADH-quinone reductase subunit F (407 aa).

The chain crosses the membrane as a helical span at residues 4-24; sequence IILGVFFFTAIVVALVFVILG. The 2Fe-2S ferredoxin-type domain maps to 33-125; that stretch reads GNVEVLINGE…NMKIHVHEEV (93 aa). Cysteine 68, cysteine 74, cysteine 77, and cysteine 109 together coordinate [2Fe-2S] cluster. The region spanning 128 to 269 is the FAD-binding FR-type domain; the sequence is VKKWECTVRS…SGPFGEFFAR (142 aa).

This sequence belongs to the NqrF family. Composed of six subunits; NqrA, NqrB, NqrC, NqrD, NqrE and NqrF. It depends on [2Fe-2S] cluster as a cofactor. The cofactor is FAD.

It localises to the cell inner membrane. The catalysed reaction is a ubiquinone + n Na(+)(in) + NADH + H(+) = a ubiquinol + n Na(+)(out) + NAD(+). Functionally, NQR complex catalyzes the reduction of ubiquinone-1 to ubiquinol by two successive reactions, coupled with the transport of Na(+) ions from the cytoplasm to the periplasm. The first step is catalyzed by NqrF, which accepts electrons from NADH and reduces ubiquinone-1 to ubisemiquinone by a one-electron transfer pathway. The sequence is that of Na(+)-translocating NADH-quinone reductase subunit F from Methylococcus capsulatus (strain ATCC 33009 / NCIMB 11132 / Bath).